The following is an 88-amino-acid chain: Small ribosomal subunit protein bS16 (88 aa).

It belongs to the bacterial ribosomal protein bS16 family.

This is Small ribosomal subunit protein bS16 from Mycoplasma pneumoniae (strain ATCC 29342 / M129 / Subtype 1) (Mycoplasmoides pneumoniae).